A 200-amino-acid polypeptide reads, in one-letter code: Glycerol-3-phosphate acyltransferase (200 aa).

The next 5 membrane-spanning stretches (helical) occupy residues 2 to 22, 51 to 71, 84 to 104, 114 to 134, and 158 to 178; these read FNIPAVAVSYLIGSLSFAVIV, KAAALTLLGDAAKGLVAVLLA, AIAAVALAALVGHMWPVFFGF, LGVLLALSPTTALVCALIWLV, and LFFMPHTSWIFATLAIAILVL.

This sequence belongs to the PlsY family. Probably interacts with PlsX.

The protein resides in the cell inner membrane. It catalyses the reaction an acyl phosphate + sn-glycerol 3-phosphate = a 1-acyl-sn-glycero-3-phosphate + phosphate. It functions in the pathway lipid metabolism; phospholipid metabolism. Catalyzes the transfer of an acyl group from acyl-phosphate (acyl-PO(4)) to glycerol-3-phosphate (G3P) to form lysophosphatidic acid (LPA). This enzyme utilizes acyl-phosphate as fatty acyl donor, but not acyl-CoA or acyl-ACP. The polypeptide is Glycerol-3-phosphate acyltransferase (Neisseria meningitidis serogroup A / serotype 4A (strain DSM 15465 / Z2491)).